The sequence spans 269 residues: Basic leucine zipper 19 (269 aa).

The bZIP domain maps to 140-196; sequence DPKRVKRILANRQSAQRSRVRKLQYISELERSVTTLQMEVSALSPRVAFLDHQRSLL. The segment at 142 to 161 is basic motif; that stretch reads KRVKRILANRQSAQRSRVRK. Residues 168 to 196 are leucine-zipper; sequence LERSVTTLQMEVSALSPRVAFLDHQRSLL.

Expressed in roots and shoots.

The protein localises to the nucleus. In terms of biological role, transcription regulator. This is Basic leucine zipper 19 (BZIP19) from Oryza sativa subsp. japonica (Rice).